The sequence spans 274 residues: 3',5'-cyclic adenosine monophosphate phosphodiesterase CpdA (274 aa).

Asp21, His23, Asp63, Asn93, His163, His202, and His204 together coordinate Fe cation. AMP contacts are provided by residues His23, Asp63, and 93–94 (NH). His204 lines the AMP pocket.

The protein belongs to the cyclic nucleotide phosphodiesterase class-III family. Requires Fe(2+) as cofactor.

The catalysed reaction is 3',5'-cyclic AMP + H2O = AMP + H(+). Functionally, hydrolyzes cAMP to 5'-AMP. Plays an important regulatory role in modulating the intracellular concentration of cAMP, thereby influencing cAMP-dependent processes. The polypeptide is 3',5'-cyclic adenosine monophosphate phosphodiesterase CpdA (Vibrio vulnificus (strain CMCP6)).